Here is a 452-residue protein sequence, read N- to C-terminus: Phosphoglucosamine mutase (452 aa).

Catalysis depends on serine 108, which acts as the Phosphoserine intermediate. Residues serine 108, aspartate 247, aspartate 249, and aspartate 251 each coordinate Mg(2+). The residue at position 108 (serine 108) is a Phosphoserine.

The protein belongs to the phosphohexose mutase family. Mg(2+) serves as cofactor. Activated by phosphorylation.

The catalysed reaction is alpha-D-glucosamine 1-phosphate = D-glucosamine 6-phosphate. Functionally, catalyzes the conversion of glucosamine-6-phosphate to glucosamine-1-phosphate. This chain is Phosphoglucosamine mutase, found in Burkholderia pseudomallei (strain 668).